A 659-amino-acid polypeptide reads, in one-letter code: RNA-binding protein MIP6 (659 aa).

The span at 1 to 27 shows a compositional bias: polar residues; sequence MPNSHGNVLNNISLNSKQNPRSISKSC. A disordered region spans residues 1–35; sequence MPNSHGNVLNNISLNSKQNPRSISKSCPNDKDARQ. RRM domains lie at 111-189, 199-267, and 313-389; these read NSLF…PSMK, TNVF…GNKI, and KTIL…PGKD.

In terms of assembly, interacts with MEX67.

The protein resides in the cytoplasm. The sequence is that of RNA-binding protein MIP6 (MIP6) from Saccharomyces cerevisiae (strain ATCC 204508 / S288c) (Baker's yeast).